Here is a 312-residue protein sequence, read N- to C-terminus: Putative pyridoxal kinase BUD16 (312 aa).

Substrate is bound by residues Ser-9, Thr-44, and Tyr-122. ATP-binding positions include 183-184 (TS) and 211-223 (RVPF…TGVG). Asp-224 is a substrate binding site.

It belongs to the pyridoxine kinase family. The cofactor is a divalent metal cation.

The protein localises to the cytoplasm. It is found in the nucleus. The enzyme catalyses pyridoxal + ATP = pyridoxal 5'-phosphate + ADP + H(+). Its function is as follows. Required for synthesis of pyridoxal-5-phosphate from vitamin B6. Important for bud site selection. The protein is Putative pyridoxal kinase BUD16 (BUD16) of Saccharomyces cerevisiae (strain ATCC 204508 / S288c) (Baker's yeast).